We begin with the raw amino-acid sequence, 624 residues long: Chaperone protein HtpG (624 aa).

An a; substrate-binding region spans residues 1-336 (MKGQETRGFQ…SSDLPLNVSR (336 aa)). Residues 337–552 (EILQDSTVTR…ADEMSTQMAK (216 aa)) form a b region. The c stretch occupies residues 553-624 (LFAAAGQKVP…IRRMNQLLVS (72 aa)).

The protein belongs to the heat shock protein 90 family. In terms of assembly, homodimer.

The protein resides in the cytoplasm. Molecular chaperone. Has ATPase activity. This chain is Chaperone protein HtpG, found in Shigella boydii serotype 4 (strain Sb227).